A 149-amino-acid chain; its full sequence is Aquaporin-like protein 2 (149 aa).

A disordered region spans residues Met-1 to Ser-35. The Cytoplasmic segment spans residues Met-1–His-47. The helical transmembrane segment at Phe-48–Ile-68 threads the bilayer. The Extracellular portion of the chain corresponds to Cys-69–Gln-89. Residues Leu-90–Trp-110 form a helical membrane-spanning segment. The Cytoplasmic segment spans residues Gly-111 to Arg-149.

It belongs to the MIP/aquaporin (TC 1.A.8) family.

The protein resides in the endoplasmic reticulum membrane. It is found in the cell membrane. Functionally, water channel required to facilitate the transport of water across membranes. Involved in freeze tolerance, osmotolerance and cell flocculation in liquid cultures. Is non-functional in most laboratory strains. This is Aquaporin-like protein 2 (AQY2-2) from Saccharomyces cerevisiae (strain RM11-1a) (Baker's yeast).